Reading from the N-terminus, the 500-residue chain is Histidine ammonia-lyase (500 aa).

The segment at residues 141–143 is a cross-link (5-imidazolinone (Ala-Gly)); sequence ASG. S142 bears the 2,3-didehydroalanine (Ser) mark.

This sequence belongs to the PAL/histidase family. Contains an active site 4-methylidene-imidazol-5-one (MIO), which is formed autocatalytically by cyclization and dehydration of residues Ala-Ser-Gly.

The protein localises to the cytoplasm. It carries out the reaction L-histidine = trans-urocanate + NH4(+). The protein operates within amino-acid degradation; L-histidine degradation into L-glutamate; N-formimidoyl-L-glutamate from L-histidine: step 1/3. The polypeptide is Histidine ammonia-lyase (Shouchella clausii (strain KSM-K16) (Alkalihalobacillus clausii)).